Consider the following 394-residue polypeptide: AIAAVITFLILFTIFGNALVILAVLTSRSLRAPQNLFLVSLAAADILVATLIIPFSLANELLGYWYFRRTWCEVYLALDVLFCTSSIVHLCAISLDRYWAVSRALEYNCKRTPRRIKCIILTVWLIAAAISLPPLIYKGDQGPQPHGAPQCKLNQEAWYILSSSLGSFFVPCLIMILVYLRIYLIAKRSHRRGPRAKGGPGEGESRQACPVPGGPSASAKLPTLATPVASASEANGPSKPAGEKEEGETPEDPGTQALPPGWATLPNSGQGQKEGVSGASLEEEAEEEEEEEEEEDEPQAVPVSPASVGSPPLQQPQGSRVLATLRGQVLVGRGVGAMSGQWWRRRAQLSREKRFTFVLAVVIGVFVLCWFPFFFSYSLSAICPQQCRVPHGLF.

A helical membrane pass occupies residues 1–25 (AIAAVITFLILFTIFGNALVILAVL). Topologically, residues 26 to 36 (TSRSLRAPQNL) are cytoplasmic. Residues 37–62 (FLVSLAAADILVATLIIPFSLANELL) traverse the membrane as a helical segment. The Extracellular segment spans residues 63 to 72 (GYWYFRRTWC). Cysteines 72 and 151 form a disulfide. The helical transmembrane segment at 73–95 (EVYLALDVLFCTSSIVHLCAISL) threads the bilayer. At 96–117 (DRYWAVSRALEYNCKRTPRRIK) the chain is on the cytoplasmic side. The chain crosses the membrane as a helical span at residues 118–140 (CIILTVWLIAAAISLPPLIYKGD). Residues 141–156 (QGPQPHGAPQCKLNQE) lie on the Extracellular side of the membrane. The chain crosses the membrane as a helical span at residues 157-180 (AWYILSSSLGSFFVPCLIMILVYL). Topologically, residues 181-358 (RIYLIAKRSH…LSREKRFTFV (178 aa)) are cytoplasmic. The disordered stretch occupies residues 191-318 (RRGPRAKGGP…GSPPLQQPQG (128 aa)). Acidic residues predominate over residues 281–298 (LEEEAEEEEEEEEEEDEP). Residues 299–312 (QAVPVSPASVGSPP) are compositionally biased toward low complexity. The chain crosses the membrane as a helical span at residues 359-382 (LAVVIGVFVLCWFPFFFSYSLSAI). Topologically, residues 383-391 (CPQQCRVPH) are extracellular. A helical transmembrane segment spans residues 392-394 (GLF).

This sequence belongs to the G-protein coupled receptor 1 family. Adrenergic receptor subfamily. ADRA2B sub-subfamily. As to quaternary structure, interacts with RAB26. Interacts with PPP1R9B. Interacts with GGA1, GGA2 and GGA3.

The protein localises to the cell membrane. Its function is as follows. Alpha-2 adrenergic receptors mediate the catecholamine-induced inhibition of adenylate cyclase through the action of G proteins. This chain is Alpha-2B adrenergic receptor (ADRA2B), found in Oryctolagus cuniculus (Rabbit).